The sequence spans 210 residues: Orotate phosphoribosyltransferase (210 aa).

5-phospho-alpha-D-ribose 1-diphosphate-binding positions include R94, K98, H100, and 120 to 128; that span reads EDLISTGGS. Orotate is bound at residue S124.

Belongs to the purine/pyrimidine phosphoribosyltransferase family. PyrE subfamily. Homodimer. The cofactor is Mg(2+).

It carries out the reaction orotidine 5'-phosphate + diphosphate = orotate + 5-phospho-alpha-D-ribose 1-diphosphate. Its pathway is pyrimidine metabolism; UMP biosynthesis via de novo pathway; UMP from orotate: step 1/2. Catalyzes the transfer of a ribosyl phosphate group from 5-phosphoribose 1-diphosphate to orotate, leading to the formation of orotidine monophosphate (OMP). The polypeptide is Orotate phosphoribosyltransferase (Bacillus cereus (strain ATCC 14579 / DSM 31 / CCUG 7414 / JCM 2152 / NBRC 15305 / NCIMB 9373 / NCTC 2599 / NRRL B-3711)).